Reading from the N-terminus, the 325-residue chain is Elongation factor P--(R)-beta-lysine ligase (325 aa).

Substrate is bound at residue 76–78 (SPE). ATP-binding positions include 100-102 (RNE) and Asn109. Substrate is bound at residue Tyr118. An ATP-binding site is contributed by 244–245 (EL). Residue Glu251 participates in substrate binding. Position 300 (Gly300) interacts with ATP.

It belongs to the class-II aminoacyl-tRNA synthetase family. EpmA subfamily. Homodimer.

It catalyses the reaction D-beta-lysine + L-lysyl-[protein] + ATP = N(6)-((3R)-3,6-diaminohexanoyl)-L-lysyl-[protein] + AMP + diphosphate + H(+). With EpmB is involved in the beta-lysylation step of the post-translational modification of translation elongation factor P (EF-P). Catalyzes the ATP-dependent activation of (R)-beta-lysine produced by EpmB, forming a lysyl-adenylate, from which the beta-lysyl moiety is then transferred to the epsilon-amino group of a conserved specific lysine residue in EF-P. This chain is Elongation factor P--(R)-beta-lysine ligase, found in Edwardsiella ictaluri (strain 93-146).